The following is a 576-amino-acid chain: 4-alpha-glucanotransferase, chloroplastic/amyloplastic (576 aa).

Residues 1–52 constitute a chloroplast transit peptide; it reads MAIHTCFSLIPSSFSSPKLPYPKNTTFQSPIPKLSRPTFMFDRKGSFQNGTA.

Belongs to the disproportionating enzyme family. As to expression, present in leaves, stems, roots, and stolons but is most abundant in developing and mature tubers.

It localises to the plastid. It is found in the chloroplast. The protein localises to the amyloplast. It carries out the reaction Transfers a segment of a (1-&gt;4)-alpha-D-glucan to a new position in an acceptor, which may be glucose or a (1-&gt;4)-alpha-D-glucan.. In terms of biological role, may act during starch breakdown to convert small oligosaccharides into larger molecules upon which starch phosphorylase can act, or may change the structure of starch molecules and grain architecture by modifying chain length, or may generate from starch and glucose oligosaccharides which can serve either as primers for new starch phosphoenzyme. The protein is 4-alpha-glucanotransferase, chloroplastic/amyloplastic (DPEP) of Solanum tuberosum (Potato).